Reading from the N-terminus, the 364-residue chain is UDP-N-acetylglucosamine--N-acetylmuramyl-(pentapeptide) pyrophosphoryl-undecaprenol N-acetylglucosamine transferase (364 aa).

Residues 13–15 (TGG), N125, R165, S192, and Q293 each bind UDP-N-acetyl-alpha-D-glucosamine.

It belongs to the glycosyltransferase 28 family. MurG subfamily.

Its subcellular location is the cell inner membrane. It carries out the reaction di-trans,octa-cis-undecaprenyl diphospho-N-acetyl-alpha-D-muramoyl-L-alanyl-D-glutamyl-meso-2,6-diaminopimeloyl-D-alanyl-D-alanine + UDP-N-acetyl-alpha-D-glucosamine = di-trans,octa-cis-undecaprenyl diphospho-[N-acetyl-alpha-D-glucosaminyl-(1-&gt;4)]-N-acetyl-alpha-D-muramoyl-L-alanyl-D-glutamyl-meso-2,6-diaminopimeloyl-D-alanyl-D-alanine + UDP + H(+). Its pathway is cell wall biogenesis; peptidoglycan biosynthesis. Cell wall formation. Catalyzes the transfer of a GlcNAc subunit on undecaprenyl-pyrophosphoryl-MurNAc-pentapeptide (lipid intermediate I) to form undecaprenyl-pyrophosphoryl-MurNAc-(pentapeptide)GlcNAc (lipid intermediate II). The protein is UDP-N-acetylglucosamine--N-acetylmuramyl-(pentapeptide) pyrophosphoryl-undecaprenol N-acetylglucosamine transferase of Cereibacter sphaeroides (strain ATCC 17029 / ATH 2.4.9) (Rhodobacter sphaeroides).